A 552-amino-acid polypeptide reads, in one-letter code: FERRY endosomal RAB5 effector complex subunit 3 (552 aa).

At S79 the chain carries Phosphoserine.

In terms of assembly, component of the FERRY complex composed of five subunits, TBCK, PPP1R21, FERRY3, CRYZL1 and GATD1 with a ratio of 1:2:1:2:4, respectively.

Its subcellular location is the cytoplasm. The protein localises to the early endosome. Its function is as follows. Component of the FERRY complex (Five-subunit Endosomal Rab5 and RNA/ribosome intermediary). The FERRY complex directly interacts with mRNAs and RAB5A, and functions as a RAB5A effector involved in the localization and the distribution of specific mRNAs most likely by mediating their endosomal transport. The complex recruits mRNAs and ribosomes to early endosomes through direct mRNA-interaction. Plays a role in mast cell degranulation. The sequence is that of FERRY endosomal RAB5 effector complex subunit 3 from Rattus norvegicus (Rat).